A 191-amino-acid polypeptide reads, in one-letter code: uncharacterized protein (191 aa).

A signal peptide spans 1–17 (MESIILSIAIFIGVLLG). The tract at residues 82–148 (TFSGSRTSPD…DVGAGSGSSI (67 aa)) is disordered. Residues 168 to 188 (VAVLITAAILSAPVTAIALLE) traverse the membrane as a helical segment.

The protein localises to the membrane. This is an uncharacterized protein from Saccharomyces cerevisiae (strain ATCC 204508 / S288c) (Baker's yeast).